The sequence spans 328 residues: Cytochrome c biogenesis protein CcsA (328 aa).

The next 8 membrane-spanning stretches (helical) occupy residues 13–33, 46–66, 73–93, 101–121, 146–166, 234–254, 263–283, and 295–315; these read ISFS…LVNL, GIII…IYSG, LYES…VSYF, LNAI…SGLL, MILG…LLVI, IISL…VWAN, WDPK…YLHI, and AIVA…VNLL.

Belongs to the CcmF/CycK/Ccl1/NrfE/CcsA family. As to quaternary structure, may interact with Ccs1.

The protein resides in the plastid. The protein localises to the chloroplast thylakoid membrane. In terms of biological role, required during biogenesis of c-type cytochromes (cytochrome c6 and cytochrome f) at the step of heme attachment. The protein is Cytochrome c biogenesis protein CcsA of Capsella bursa-pastoris (Shepherd's purse).